Reading from the N-terminus, the 105-residue chain is Guanyl-specific ribonuclease Ms (105 aa).

Cystine bridges form between C3–C11 and C7–C102. H39 is a catalytic residue. E57 (proton acceptor) is an active-site residue. H91 acts as the Proton donor in catalysis.

Belongs to the ribonuclease N1/T1 family.

The enzyme catalyses [RNA] containing guanosine + H2O = an [RNA fragment]-3'-guanosine-3'-phosphate + a 5'-hydroxy-ribonucleotide-3'-[RNA fragment].. The polypeptide is Guanyl-specific ribonuclease Ms (Aspergillus phoenicis (Aspergillus saitoi)).